Here is a 186-residue protein sequence, read N- to C-terminus: uncharacterized protein (186 aa).

Helical transmembrane passes span 5-25 (LIAC…FEDI), 39-59 (IITI…KLFA), 62-82 (NLLF…ILLF), and 122-142 (GFFE…IALM).

Its subcellular location is the cell membrane. This is an uncharacterized protein from Borreliella burgdorferi (strain ATCC 35210 / DSM 4680 / CIP 102532 / B31) (Borrelia burgdorferi).